The chain runs to 208 residues: Small ribosomal subunit protein uS4 (208 aa).

The S4 RNA-binding domain maps to 98–160 (QRLDNVVYRM…SKNNSQIVRA (63 aa)).

Belongs to the universal ribosomal protein uS4 family. In terms of assembly, part of the 30S ribosomal subunit. Contacts protein S5. The interaction surface between S4 and S5 is involved in control of translational fidelity.

Functionally, one of the primary rRNA binding proteins, it binds directly to 16S rRNA where it nucleates assembly of the body of the 30S subunit. Its function is as follows. With S5 and S12 plays an important role in translational accuracy. The chain is Small ribosomal subunit protein uS4 from Sulfurimonas denitrificans (strain ATCC 33889 / DSM 1251) (Thiomicrospira denitrificans (strain ATCC 33889 / DSM 1251)).